The primary structure comprises 220 residues: Uracil-DNA glycosylase (220 aa).

Catalysis depends on aspartate 65, which acts as the Proton acceptor.

It belongs to the uracil-DNA glycosylase (UDG) superfamily. UNG family.

It is found in the cytoplasm. It catalyses the reaction Hydrolyzes single-stranded DNA or mismatched double-stranded DNA and polynucleotides, releasing free uracil.. In terms of biological role, excises uracil residues from the DNA which can arise as a result of misincorporation of dUMP residues by DNA polymerase or due to deamination of cytosine. This Amoebophilus asiaticus (strain 5a2) protein is Uracil-DNA glycosylase.